Reading from the N-terminus, the 291-residue chain is Phosphate import ATP-binding protein PstB (291 aa).

The segment at 1–21 (MANKQIIDKNDDLQAHTDRND) is disordered. Positions 45–286 (YSTKNLDLWY…PSDKQTEDYI (242 aa)) constitute an ABC transporter domain. 77–84 (GPSGCGKS) contributes to the ATP binding site.

Belongs to the ABC transporter superfamily. Phosphate importer (TC 3.A.1.7) family. As to quaternary structure, the complex is composed of two ATP-binding proteins (PstB), two transmembrane proteins (PstC and PstA) and a solute-binding protein (PstS).

Its subcellular location is the cell membrane. It catalyses the reaction phosphate(out) + ATP + H2O = ADP + 2 phosphate(in) + H(+). Functionally, part of the ABC transporter complex PstSACB involved in phosphate import. Responsible for energy coupling to the transport system. The protein is Phosphate import ATP-binding protein PstB of Staphylococcus saprophyticus subsp. saprophyticus (strain ATCC 15305 / DSM 20229 / NCIMB 8711 / NCTC 7292 / S-41).